A 276-amino-acid polypeptide reads, in one-letter code: MEPGLCNRAYLLVGGLWTAISKALFAEFLATGLYVFFGVGSVLPWPVALPSVLQVAITFNLATATAVQISWKTSGAHANPAVTLAYLVGSHISLPRAVAYIAAQLAGATVGAALLYGVTPGGVRETLGVNVVHNSTSTGQAVAVELVLTLQLVLCVFASMDSRQTLGSPAAMIGTSVALGHLIGIYFTGCSMNPARSFGPAVIVGKFAVHWIFWVGPLTGAVLASLIYNFILFPDTKTVAQRLAILVGTTKVEKVVDLEPQKKESQTNSEDTEVSV.

The Cytoplasmic segment spans residues M1 to K22. Residues A23–L43 form a helical membrane-spanning segment. At P44 to S51 the chain is on the extracellular side. Residues V52–S70 traverse the membrane as a helical segment. The Cytoplasmic segment spans residues W71 to G75. The discontinuously helical intramembrane region spans A76–A85. An NPA 1 motif is present at residues N79–A81. The Cytoplasmic segment spans residues Y86 to R96. A helical membrane pass occupies residues A97 to V118. The Extracellular segment spans residues T119 to T138. An N-linked (GlcNAc...) asparagine glycan is attached at N134. A helical transmembrane segment spans residues G139–S159. Over M160–T165 the chain is Cytoplasmic. Residues L166–I185 traverse the membrane as a helical segment. Residues Y186–G189 lie on the Extracellular side of the membrane. The segment at residues C190–V202 is an intramembrane region (discontinuously helical). The short motif at N193–A195 is the NPA 2 element. At I203 to H210 the chain is on the extracellular side. A helical membrane pass occupies residues W211–I231. Residues L232–V276 are Cytoplasmic-facing.

It belongs to the MIP/aquaporin (TC 1.A.8) family. As to quaternary structure, homotetramer; each monomer provides an independent solute pore. In terms of processing, N-glycosylated. Kidney.

It is found in the cytoplasmic vesicle membrane. The enzyme catalyses nitrate(in) = nitrate(out). It catalyses the reaction iodide(out) = iodide(in). It carries out the reaction bromide(in) = bromide(out). The catalysed reaction is chloride(in) = chloride(out). The enzyme catalyses Na(+)(in) = Na(+)(out). It catalyses the reaction H2O(in) = H2O(out). It carries out the reaction CO2(out) = CO2(in). The catalysed reaction is NH4(+)(in) = NH4(+)(out). Activated by mercury and pH-gated, anion permeability is observed at pH 5.5 and increases markedly at pH 4.0. Selectivity for chloride increases at low pH. The water channel activity is stimulated by mercury by opposition to other aquaporins. Aquaporins form homotetrameric transmembrane channels, with each monomer independently mediating water transport across the plasma membrane along its osmotic gradient. Unlike classical aquaporins, AQP6 is an intracellular channel with selective anion permeability, particularly for nitrate, and exhibits very low water permeability. It may also facilitate the transport of gases, such as CO2 and NH4(+), as demonstrated in vitro. This is Aquaporin-6 from Rattus norvegicus (Rat).